The primary structure comprises 795 residues: uncharacterized protein (795 aa).

This is an uncharacterized protein from Methanocaldococcus jannaschii (strain ATCC 43067 / DSM 2661 / JAL-1 / JCM 10045 / NBRC 100440) (Methanococcus jannaschii).